Here is a 330-residue protein sequence, read N- to C-terminus: Aspartate--ammonia ligase (330 aa).

Belongs to the class-II aminoacyl-tRNA synthetase family. AsnA subfamily.

The protein resides in the cytoplasm. The catalysed reaction is L-aspartate + NH4(+) + ATP = L-asparagine + AMP + diphosphate + H(+). Its pathway is amino-acid biosynthesis; L-asparagine biosynthesis; L-asparagine from L-aspartate (ammonia route): step 1/1. This is Aspartate--ammonia ligase from Escherichia coli O127:H6 (strain E2348/69 / EPEC).